The sequence spans 248 residues: DNA polymerase sliding clamp 2 (248 aa).

This sequence belongs to the PCNA family. As to quaternary structure, homotrimer. The subunits circularize to form a toroid; DNA passes through its center. Replication factor C (RFC) is required to load the toroid on the DNA.

Its function is as follows. Sliding clamp subunit that acts as a moving platform for DNA processing. Responsible for tethering the catalytic subunit of DNA polymerase and other proteins to DNA during high-speed replication. The chain is DNA polymerase sliding clamp 2 from Sulfurisphaera ohwakuensis.